We begin with the raw amino-acid sequence, 439 residues long: uncharacterized protein (439 aa).

In terms of domain architecture, VWFA spans 273–439; that stretch reads PIIILLDHSG…EARKIYKSIS (167 aa).

This is an uncharacterized protein from Methanocaldococcus jannaschii (strain ATCC 43067 / DSM 2661 / JAL-1 / JCM 10045 / NBRC 100440) (Methanococcus jannaschii).